The primary structure comprises 204 residues: Peptide chain release factor homolog (204 aa).

The tract at residues 2 to 98 (ILLQLSSAQG…KNWFLGIGRF (97 aa)) is rRNA-recognition domain, N-terminus. Residues 99-107 (TADEQEQSD) form a linker 1 region. Residues 108–161 (AIRYETLRSSGPGGQHVNKTDSAVRATHLASGISVKVQSERSQHANKRLARLLI) form a GGQ domain region. The short motif at 120–122 (GGQ) is the GGQ motif element. The tract at residues 162–179 (AWKLEQQQQENSAALKSQ) is linker 2. The rRNA-recognition domain, C-terminus stretch occupies residues 180 to 204 (RRMFHHQIERGNPRRTFTGMAFIEG).

Belongs to the prokaryotic/mitochondrial release factor family. Found in the A site of damaged 70S ribosomes, but not in undamaged ribosomes. Contacts (damaged) 16S rRNA, 23S rRNA and ribosomal protein uS12, but not mRNA.

Its function is as follows. Peptide chain release-like factor that acts on 70S ribosomes with specific damage to their decoding center (cleavage of 16S rRNA between adenine-1493 and guanosine-1494, E.coli 16S rRNA numbering). Probably acts as a peptidyl-tRNA hydrolase, allowing release of the nascent chain and dissociation of the 30S and 50S subunits. Can release mRNA as short as 19 nucleotides (nt, mRNA-19, which has a single amino acid in the P-site and only a single nt in the A-site) from the ribosome. This specific cleavage is inflicted by CdiA (ECL_04451) or by colicin E3-type (ColE3) proteins. In vivo the PrfH-RtcB2 pair restores growth in the presence of ribotoxins that specifically create this damage. The sequence is that of Peptide chain release factor homolog from Escherichia coli (strain ATCC 25922 / DSM 1103 / LMG 8223 / NCIMB 12210 / NCTC 12241 / WDCM 00013 / Seattle 1946).